The sequence spans 362 residues: Dihydroorotate dehydrogenase (quinone) (362 aa).

FMN contacts are provided by residues Ala-62 to Lys-66 and Thr-86. Position 66 (Lys-66) interacts with substrate. Residue Asn-111–Phe-115 coordinates substrate. Residues Asn-139 and Asn-170 each contribute to the FMN site. Asn-170 provides a ligand contact to substrate. Ser-173 functions as the Nucleophile in the catalytic mechanism. Residue Asn-175 coordinates substrate. FMN contacts are provided by Lys-215 and Ser-243. Asn-244–Thr-245 serves as a coordination point for substrate. Residues Gly-266, Gly-295, and Tyr-316–Ser-317 each bind FMN.

It belongs to the dihydroorotate dehydrogenase family. Type 2 subfamily. As to quaternary structure, monomer. FMN is required as a cofactor.

It localises to the cell membrane. It catalyses the reaction (S)-dihydroorotate + a quinone = orotate + a quinol. It functions in the pathway pyrimidine metabolism; UMP biosynthesis via de novo pathway; orotate from (S)-dihydroorotate (quinone route): step 1/1. Its function is as follows. Catalyzes the conversion of dihydroorotate to orotate with quinone as electron acceptor. The chain is Dihydroorotate dehydrogenase (quinone) from Rhizobium rhizogenes (strain K84 / ATCC BAA-868) (Agrobacterium radiobacter).